We begin with the raw amino-acid sequence, 159 residues long: Capsid protein (159 aa).

At S2 the chain carries N-acetylserine; by host.

It belongs to the virgaviridae capsid protein family.

Its subcellular location is the virion. In terms of biological role, capsid protein self-assembles to form rod-shaped virions about 18 nm in diameter with a central canal enclosing the viral genomic RNA. In Nicotiana tabacum (Common tobacco), this protein is Capsid protein (CP).